We begin with the raw amino-acid sequence, 492 residues long: MDLSKFRPSSAYDSPFLTTNAGGPVYNNVSSLTVGPRGPVLLEDYHLIEKLATFDRERIPERVVHARGASAKGFFEVTHDISHLTCADFLRAPGVQTPVICRFSTVVHERGSPESLRDIRGFAVKFYTREGNFDLVGNNVPVFFNRDAKSFPDTIRALKPNPKSHIQEYWKILDFFSFLPESLHTFAWFFDDVCLPTDYRHMEGYGVHAYQLINKAGKAHYVKFHWKPTCGVKCMSEEEAIRVGGTNHSHATKDLYDSIAAGNYPEWKLFIQIMDTEDVDKFDFDPLDVTKTWPEDILPLMPVGRLVLNRNIDNFFAENEQLAFNPGHIVPGLYYSEDKLLQTRIFAYADTQRHRIGPNYMQLPVNAPKCAHHNNHRDGAMNFMHRDEEVDYLPSRFDPCRHAEQYPIPSRVLTGRREMCVIEKENNFKQAGERYRSWEPDRQDRYVSKWVEHLSDPRVTYEIRSIWISYLSQADKSCGQKVASRLTLKPTM.

Active-site residues include histidine 65 and asparagine 138. Tyrosine 348 lines the heme pocket.

This sequence belongs to the catalase family. Homotetramer. Heme serves as cofactor.

The protein localises to the cytoplasm. The protein resides in the cytosol. It is found in the peroxisome matrix. It catalyses the reaction 2 H2O2 = O2 + 2 H2O. Inhibited by salicylic acid. Catalyzes the degradation of hydrogen peroxide (H(2)O(2)) generated by peroxisomal oxidases to water and oxygen, thereby protecting cells from the toxic effects of hydrogen peroxide. The chain is Catalase isozyme 1 (CAT-1) from Nicotiana tabacum (Common tobacco).